The following is a 446-amino-acid chain: Histidine--tRNA ligase (446 aa).

Positions 403–422 are disordered; it reads TASVKPLRGTGDDGEKSVQQ.

Belongs to the class-II aminoacyl-tRNA synthetase family. In terms of assembly, homodimer.

The protein localises to the cytoplasm. It carries out the reaction tRNA(His) + L-histidine + ATP = L-histidyl-tRNA(His) + AMP + diphosphate + H(+). The polypeptide is Histidine--tRNA ligase (Burkholderia thailandensis (strain ATCC 700388 / DSM 13276 / CCUG 48851 / CIP 106301 / E264)).